A 238-amino-acid chain; its full sequence is ATP-dependent dethiobiotin synthetase BioD (238 aa).

Position 12–17 (12–17 (GVGKTV)) interacts with ATP. Thr16 lines the Mg(2+) pocket. Lys37 is an active-site residue. Thr41 provides a ligand contact to substrate. ATP is bound by residues Asp50, 109-112 (EGAG), 170-171 (GS), and 200-202 (PAG). 2 residues coordinate Mg(2+): Asp50 and Glu109.

It belongs to the dethiobiotin synthetase family. In terms of assembly, homodimer. Mg(2+) serves as cofactor.

Its subcellular location is the cytoplasm. The enzyme catalyses (7R,8S)-7,8-diammoniononanoate + CO2 + ATP = (4R,5S)-dethiobiotin + ADP + phosphate + 3 H(+). It participates in cofactor biosynthesis; biotin biosynthesis; biotin from 7,8-diaminononanoate: step 1/2. In terms of biological role, catalyzes a mechanistically unusual reaction, the ATP-dependent insertion of CO2 between the N7 and N8 nitrogen atoms of 7,8-diaminopelargonic acid (DAPA, also called 7,8-diammoniononanoate) to form a ureido ring. The chain is ATP-dependent dethiobiotin synthetase BioD from Frankia casuarinae (strain DSM 45818 / CECT 9043 / HFP020203 / CcI3).